Here is a 140-residue protein sequence, read N- to C-terminus: Nucleoside diphosphate kinase (140 aa).

ATP-binding residues include lysine 11, phenylalanine 59, arginine 87, threonine 93, arginine 104, and asparagine 114. Histidine 117 serves as the catalytic Pros-phosphohistidine intermediate.

It belongs to the NDK family. In terms of assembly, homotetramer. Requires Mg(2+) as cofactor.

The protein resides in the cytoplasm. It catalyses the reaction a 2'-deoxyribonucleoside 5'-diphosphate + ATP = a 2'-deoxyribonucleoside 5'-triphosphate + ADP. The enzyme catalyses a ribonucleoside 5'-diphosphate + ATP = a ribonucleoside 5'-triphosphate + ADP. Functionally, major role in the synthesis of nucleoside triphosphates other than ATP. The ATP gamma phosphate is transferred to the NDP beta phosphate via a ping-pong mechanism, using a phosphorylated active-site intermediate. This Rhodopseudomonas palustris (strain BisA53) protein is Nucleoside diphosphate kinase.